Reading from the N-terminus, the 402-residue chain is Tumor necrosis factor receptor superfamily member 11B (402 aa).

The signal sequence occupies residues 1-21; sequence MNKLLCCALVFLDISIKWTTQ. TNFR-Cys repeat units follow at residues 24 to 62, 64 to 105, 106 to 142, and 144 to 185; these read FPPK…KTVC, PCPD…NRVC, ECEE…NTVC, and RCPD…DNIC. 8 disulfides stabilise this stretch: cysteine 41-cysteine 54, cysteine 44-cysteine 62, cysteine 65-cysteine 80, cysteine 83-cysteine 97, cysteine 87-cysteine 105, cysteine 107-cysteine 118, cysteine 124-cysteine 142, and cysteine 145-cysteine 160. Residues asparagine 165 and asparagine 178 are each glycosylated (N-linked (GlcNAc...) asparagine). Cysteine 166 and cysteine 185 are oxidised to a cystine. 2 Death domains span residues 198–269 and 270–365; these read IDMT…DMVK and KIIQ…VIQS.

In terms of assembly, homodimer. Interacts with TNFSF10 and TNFSF11. N-glycosylated. Contains sialic acid residues.

It is found in the secreted. In terms of biological role, acts as a decoy receptor for TNFSF11/RANKL and thereby neutralizes its function in osteoclastogenesis. Inhibits the activation of osteoclasts and promotes osteoclast apoptosis. Bone homeostasis seems to depend on the local ratio between TNFSF11 and TNFRSF11B. May also play a role in preventing arterial calcification. May act as decoy receptor for TNFSF10/TRAIL and protect against apoptosis. TNFSF10/TRAIL binding blocks the inhibition of osteoclastogenesis. In Bos taurus (Bovine), this protein is Tumor necrosis factor receptor superfamily member 11B (TNFRSF11B).